The primary structure comprises 126 residues: Large ribosomal subunit protein bL12 (126 aa).

This sequence belongs to the bacterial ribosomal protein bL12 family. In terms of assembly, homodimer. Part of the ribosomal stalk of the 50S ribosomal subunit. Forms a multimeric L10(L12)X complex, where L10 forms an elongated spine to which 2 to 4 L12 dimers bind in a sequential fashion. Binds GTP-bound translation factors.

In terms of biological role, forms part of the ribosomal stalk which helps the ribosome interact with GTP-bound translation factors. Is thus essential for accurate translation. The protein is Large ribosomal subunit protein bL12 of Rhizobium meliloti (strain 1021) (Ensifer meliloti).